The following is a 429-amino-acid chain: Phosphomethylpyrimidine synthase (429 aa).

Substrate contacts are provided by residues Asn-66, Met-94, Tyr-123, His-162, 184 to 186 (SRG), 225 to 228 (DALR), and Glu-264. His-268 provides a ligand contact to Zn(2+). Substrate is bound at residue Tyr-291. His-332 contributes to the Zn(2+) binding site. The [4Fe-4S] cluster site is built by Cys-408, Cys-411, and Cys-415.

The protein belongs to the ThiC family. It depends on [4Fe-4S] cluster as a cofactor.

It carries out the reaction 5-amino-1-(5-phospho-beta-D-ribosyl)imidazole + S-adenosyl-L-methionine = 4-amino-2-methyl-5-(phosphooxymethyl)pyrimidine + CO + 5'-deoxyadenosine + formate + L-methionine + 3 H(+). The protein operates within cofactor biosynthesis; thiamine diphosphate biosynthesis. In terms of biological role, catalyzes the synthesis of the hydroxymethylpyrimidine phosphate (HMP-P) moiety of thiamine from aminoimidazole ribotide (AIR) in a radical S-adenosyl-L-methionine (SAM)-dependent reaction. The sequence is that of Phosphomethylpyrimidine synthase from Sulfurisphaera tokodaii (strain DSM 16993 / JCM 10545 / NBRC 100140 / 7) (Sulfolobus tokodaii).